Here is a 633-residue protein sequence, read N- to C-terminus: Pescadillo homolog (633 aa).

The BRCT domain maps to 321–414 (RLRTLFKGLK…QLLPTNKYFL (94 aa)). Disordered stretches follow at residues 450 to 470 (HAQS…DTVE) and 490 to 567 (KKYG…LQAR). A phosphoserine mark is found at Ser-453 and Ser-457. 2 stretches are compositionally biased toward acidic residues: residues 454 to 470 (EDES…DTVE) and 498 to 526 (VNED…EELD). Positions 527-538 (EKEKRLLEEKQK) are enriched in basic and acidic residues. A compositionally biased stretch (basic residues) spans 545-554 (KVHKVNKRQV). Positions 555–564 (HKAEVDEHRL) are enriched in basic and acidic residues. The stretch at 593–626 (LLRKKRRTIETDAKEAKKLAKREARKAAAAAAAA) forms a coiled coil.

The protein belongs to the pescadillo family.

Its subcellular location is the nucleus. The protein localises to the nucleolus. The protein resides in the nucleoplasm. In terms of biological role, required for maturation of ribosomal RNAs and formation of the large ribosomal subunit. The chain is Pescadillo homolog from Drosophila virilis (Fruit fly).